A 180-amino-acid chain; its full sequence is Sperm protein associated with the nucleus on the X chromosome N2 (180 aa).

Disordered regions lie at residues 1 to 46 and 64 to 180; these read MEQP…KTKT and NSNQ…GGED. Over residues 10-26 the composition is skewed to basic and acidic residues; it reads GEKRKSPCESNNKKNDE. Positions 82–169 are enriched in acidic residues; sequence QEEEDEGLDS…SSQEDEDLDS (88 aa). Over residues 170-180 the composition is skewed to low complexity; sequence SEGSSQEGGED.

Belongs to the SPAN-X family.

The protein is Sperm protein associated with the nucleus on the X chromosome N2 (SPANXN2) of Homo sapiens (Human).